Reading from the N-terminus, the 630-residue chain is Adagio-like protein 1 (630 aa).

Positions 1–36 (MEWDSESDGAGSIGAGEEEEEEEEEEEGGFGGGGGG) are disordered. Residues 16-28 (GEEEEEEEEEEEG) show a composition bias toward acidic residues. The region spanning 48 to 127 (IEGMLRASGP…SEIRKCIDNG (80 aa)) is the PAS domain. Cysteine 95 is subject to S-4a-FMN cysteine. The region spanning 216–262 (SSLFQLTDEVLCQSILSRLSPRDIASVSSVCRRLYLLTRNEDLWRMV) is the F-box domain. 4 Kelch repeats span residues 378-428 (LLVV…TLDG), 430-481 (KLVV…VYGG), 483-535 (KILM…AGPP), and 549-601 (RVLI…VVGG).

It belongs to the ADAGIO family. Post-translationally, FMN binds covalently to cysteine after exposure to blue light and is reversed in the dark.

Its subcellular location is the nucleus. Its pathway is protein modification; protein ubiquitination. Component of an E3 ubiquitin ligase complex that plays a central role in blue light-dependent circadian cycles. Acts as a blue light photoreceptor, due to the presence of FMN, that mediates light-regulated protein degradation of critical clock components by targeting them to the proteasome complex. This is Adagio-like protein 1 from Oryza sativa subsp. japonica (Rice).